Here is a 163-residue protein sequence, read N- to C-terminus: Disulfide bond formation protein B (163 aa).

Over 1–9 the chain is Cytoplasmic; that stretch reads MRLASPRSL. The helical transmembrane segment at 10–26 threads the bilayer; that stretch reads FVIAFLGSALLIAIALY. Topologically, residues 27-44 are periplasmic; sequence MEHVMGLAPCPLCIVQRI. A disulfide bridge links cysteine 36 with cysteine 39. The chain crosses the membrane as a helical span at residues 45 to 61; it reads CVIGFGLVCLVAAIHGP. Residues 62–67 are Cytoplasmic-facing; it reads AKVGRR. Residues 68 to 85 traverse the membrane as a helical segment; that stretch reads VYAAIAALFVAAGAATAI. The Periplasmic segment spans residues 86–142; it reads RQIWLQSVPADQLPSCLPSLEYMMEALPFQEIARLVLHGTAECAEVSWTMLGMSIPE. An intrachain disulfide couples cysteine 101 to cysteine 128. Residues 143–161 traverse the membrane as a helical segment; the sequence is WSLLGFIGMAIVCLWQLLR. At 162 to 163 the chain is on the cytoplasmic side; it reads RD.

Belongs to the DsbB family.

The protein resides in the cell inner membrane. Its function is as follows. Required for disulfide bond formation in some periplasmic proteins. Acts by oxidizing the DsbA protein. This Stutzerimonas stutzeri (strain A1501) (Pseudomonas stutzeri) protein is Disulfide bond formation protein B.